A 744-amino-acid polypeptide reads, in one-letter code: MGWNQTFLFLAFAATAASSLVGSGTSLQLNGIDYFVSPFSQGKVTNGSVAINTRQNQLGFVPATVIAGDLYTESTLQSLFLNWSTVDDVWQPAFLETIFVFNFAKLTNKNHNYHDGVSSSVFPLQVTHKIPSGPYFLNVHTGEVHPAYRLYDDFAGAFTQSLLQRPDGRFQTLSAQVPAAASITIGVPSRLYFTKTEAKPLAGVRIGVKDIFSLAGVKKGCGNRAWYHLYPVANSTGTAMQNLIDKGAIIVGVQKTSQFANGETPTADWVDYHSPFNPRGDGYQDPATSSAGAGSSIASYEWLDLAVGSDTGGSIRGPATVQGIFGNRPSHGLVSLDNVMPLSPKLDTPGFLARDPCLWNAANAALYRDKYTFFGHQAPRYPKKLYLLDFPAGNTSHAPILQNFVTKLAKFLDTSPTNIDLNKEWERTRPTSAGDQSLAQLLNTTYAAIISKDQAKLVREPFYRDYAAVHDGRLPFVNPVPLARWTWGDSQPSSLLSDAVRNKTLFMDWFNGNILPPSSDPLTCSSGLLLHVNGSADFVSRNRYINPPVPPFGFSNSQISLFAETPDSVFPLGQVPVFSSITNNTEYLPVTIDVVAAKGFQLQRDWARLRAILAPALYVDYTKIGKEKWDAMSADDFMAMVSNDDFLGDPCVKTQHLIGATYWERVSESKVIGHHQLRAAHQVYTSPDLKTVKLRGHSHATNEHYYVKSNGVWKFAGLKPEVRWNEYKFEEVFKGSYTQSEKHS.

Substrate is bound at residue Tyr-621. Catalysis depends on residues His-656 and His-681. Asn-702 contacts substrate.

It belongs to the scytalone dehydratase family. In terms of assembly, homotrimer. Each subunit contains an active site, located in the central part of the hydrophobic core of the monomer, which functions independently.

Functionally, scytalone dehydratase-like protein; part of the Pks2 gene cluster that mediates the formation of infectious structures (appressoria), enabling these fungi to kill insects faster. The product of the Pks2 gene cluster is different from the one of Pks1 and has still not been identified. The chain is Scytalone dehydratase-like protein Arp1 from Metarhizium brunneum (strain ARSEF 3297).